The primary structure comprises 413 residues: Argininosuccinate synthase (413 aa).

ATP-binding positions include 12-20 (AYSGGLDTS) and Ala39. The L-citrulline site is built by Tyr92 and Ser97. Residue Gly122 coordinates ATP. Residues Thr124, Asn128, and Asp129 each coordinate L-aspartate. Asn128 serves as a coordination point for L-citrulline. Residues Arg132, Ser189, Ser198, Glu274, and Tyr286 each coordinate L-citrulline.

The protein belongs to the argininosuccinate synthase family. Type 1 subfamily. Homotetramer.

It localises to the cytoplasm. The catalysed reaction is L-citrulline + L-aspartate + ATP = 2-(N(omega)-L-arginino)succinate + AMP + diphosphate + H(+). Its pathway is amino-acid biosynthesis; L-arginine biosynthesis; L-arginine from L-ornithine and carbamoyl phosphate: step 2/3. The protein is Argininosuccinate synthase of Aliarcobacter butzleri (strain RM4018) (Arcobacter butzleri).